We begin with the raw amino-acid sequence, 329 residues long: MKITLLGAGAWGTALSIAFSGKHDLTLWSREVDVADDLRKTRENHRFFPGYKLPESVAVSTDFEVAVAGAELLVVATPIAGLRPTVERLQALGCKLPVLWVCKGFEAGSGKLPHQVVAEVLGKEALCGALSGPSFAEEVAAGQPTAVSLATNDPAFAREAARQLHTTRLRIYANDDLVGVEVGGAVKNVLAIATGVCDGLGLGLNSRAALMTRGLAEIARLGLALGAERQTFMGLAGMGDLILTCTGDLSRNRRVGLALAQNKSLPQILEELGHVAEGVYTAREVDRLAARLGVEMPISAAVAAVLDGRLTAAQAVEQLMARDPKEELA.

Residues Trp-11, Arg-30, and Lys-103 each contribute to the NADPH site. Sn-glycerol 3-phosphate is bound by residues Lys-103, Gly-132, and Ser-134. Ala-136 is a binding site for NADPH. Sn-glycerol 3-phosphate is bound by residues Lys-187, Asp-240, Ser-250, Arg-251, and Asn-252. The active-site Proton acceptor is the Lys-187. Arg-251 provides a ligand contact to NADPH. NADPH contacts are provided by Val-275 and Glu-277.

Belongs to the NAD-dependent glycerol-3-phosphate dehydrogenase family.

Its subcellular location is the cytoplasm. It carries out the reaction sn-glycerol 3-phosphate + NAD(+) = dihydroxyacetone phosphate + NADH + H(+). The catalysed reaction is sn-glycerol 3-phosphate + NADP(+) = dihydroxyacetone phosphate + NADPH + H(+). It functions in the pathway membrane lipid metabolism; glycerophospholipid metabolism. Catalyzes the reduction of the glycolytic intermediate dihydroxyacetone phosphate (DHAP) to sn-glycerol 3-phosphate (G3P), the key precursor for phospholipid synthesis. The protein is Glycerol-3-phosphate dehydrogenase [NAD(P)+] of Dechloromonas aromatica (strain RCB).